A 341-amino-acid polypeptide reads, in one-letter code: NADH-quinone oxidoreductase subunit H (341 aa).

Transmembrane regions (helical) follow at residues 38 to 58 (PSVV…KLLV), 70 to 90 (ILFI…WAVI), 115 to 135 (IGVL…IVAG), 161 to 181 (MGLI…GEMV), 187 to 207 (MPFW…ISLL), 239 to 259 (LFFL…TIFF), 275 to 295 (IPGL…FVWT), and 314 to 334 (VFLP…LFTG).

The protein belongs to the complex I subunit 1 family. In terms of assembly, NDH-1 is composed of 14 different subunits. Subunits NuoA, H, J, K, L, M, N constitute the membrane sector of the complex.

It is found in the cell membrane. It catalyses the reaction a quinone + NADH + 5 H(+)(in) = a quinol + NAD(+) + 4 H(+)(out). Functionally, NDH-1 shuttles electrons from NADH, via FMN and iron-sulfur (Fe-S) centers, to quinones in the respiratory chain. The immediate electron acceptor for the enzyme in this species is believed to be ubiquinone. Couples the redox reaction to proton translocation (for every two electrons transferred, four hydrogen ions are translocated across the cytoplasmic membrane), and thus conserves the redox energy in a proton gradient. This subunit may bind ubiquinone. The protein is NADH-quinone oxidoreductase subunit H of Wolbachia sp. subsp. Brugia malayi (strain TRS).